The chain runs to 192 residues: Ribosomal RNA small subunit methyltransferase G (192 aa).

Residues Gly-63, Leu-68, 112–113 (IE), and Arg-125 each bind S-adenosyl-L-methionine.

The protein belongs to the methyltransferase superfamily. RNA methyltransferase RsmG family.

The protein localises to the cytoplasm. The enzyme catalyses guanosine(527) in 16S rRNA + S-adenosyl-L-methionine = N(7)-methylguanosine(527) in 16S rRNA + S-adenosyl-L-homocysteine. In terms of biological role, specifically methylates the N7 position of guanine in position 527 of 16S rRNA. This chain is Ribosomal RNA small subunit methyltransferase G, found in Rickettsia rickettsii (strain Iowa).